The primary structure comprises 234 residues: MPWGLAWLYCLGILLDVALGNENLEIWTLAQDKECDLTGYLRGKLQYKNRLQYMKHYFPINYRIAVPYEGVLRVANITRLKAHVSERELRYLWVLVSLNATESVLDVLLEGHPSWKYLQEVQTLLENVQRSLMDVEIGPHVEAVLSLLSTPGLSLKLVRPKALLDNCFRVMELLYCSCCKQSPILKWQDCELPRLHPHSPESLMQCAATNVYPLPRQPPTSLPRSPSSNHGPLP.

The first 20 residues, 1–20 (MPWGLAWLYCLGILLDVALG), serve as a signal peptide directing secretion. N99 carries an N-linked (GlcNAc...) asparagine glycan. Positions 215–234 (PRQPPTSLPRSPSSNHGPLP) are disordered. The span at 222 to 234 (LPRSPSSNHGPLP) shows a compositional bias: polar residues.

Belongs to the IL-34 family. In terms of assembly, homodimer. Interacts with CSF1R.

It localises to the secreted. Functionally, cytokine that promotes the proliferation, survival and differentiation of monocytes and macrophages. Promotes the release of pro-inflammatory chemokines, and thereby plays an important role in innate immunity and in inflammatory processes. Plays an important role in the regulation of osteoclast proliferation and differentiation, and in the regulation of bone resorption. Signaling via CSF1R and its downstream effectors stimulates phosphorylation of MAPK1/ERK2 AND MAPK3/ERK1. This chain is Interleukin-34 (Il34), found in Rattus norvegicus (Rat).